Consider the following 124-residue polypeptide: Cytochrome c oxidase subunit 4 isoform 1, mitochondrial (124 aa).

K4 carries the post-translational modification N6-acetyllysine; alternate. The residue at position 4 (K4) is an N6-succinyllysine; alternate. Residues S31 and S33 each carry the phosphoserine modification. K35 is subject to N6-acetyllysine; alternate. N6-succinyllysine; alternate is present on K35. Residue K42 is modified to N6-acetyllysine.

It belongs to the cytochrome c oxidase IV family. As to quaternary structure, component of the cytochrome c oxidase (complex IV, CIV), a multisubunit enzyme composed of 14 subunits. The complex is composed of a catalytic core of 3 subunits MT-CO1, MT-CO2 and MT-CO3, encoded in the mitochondrial DNA, and 11 supernumerary subunits COX4I, COX5A, COX5B, COX6A, COX6B, COX6C, COX7A, COX7B, COX7C, COX8 and NDUFA4, which are encoded in the nuclear genome. The complex exists as a monomer or a dimer and forms supercomplexes (SCs) in the inner mitochondrial membrane with NADH-ubiquinone oxidoreductase (complex I, CI) and ubiquinol-cytochrome c oxidoreductase (cytochrome b-c1 complex, complex III, CIII), resulting in different assemblies (supercomplex SCI(1)III(2)IV(1) and megacomplex MCI(2)III(2)IV(2)). Interacts with PHB2; the interaction decreases in absence of SPHK2. Interacts with AFG1L. Interacts with ABCB7; this interaction allows the regulation of cellular iron homeostasis and cellular reactive oxygen species (ROS) levels in cardiomyocytes. Interacts with FLVCR2; this interaction occurs in the absence of heme and is disrupted upon heme binding. Interacts with IRGC.

The protein resides in the mitochondrion inner membrane. Its pathway is energy metabolism; oxidative phosphorylation. Functionally, component of the cytochrome c oxidase, the last enzyme in the mitochondrial electron transport chain which drives oxidative phosphorylation. The respiratory chain contains 3 multisubunit complexes succinate dehydrogenase (complex II, CII), ubiquinol-cytochrome c oxidoreductase (cytochrome b-c1 complex, complex III, CIII) and cytochrome c oxidase (complex IV, CIV), that cooperate to transfer electrons derived from NADH and succinate to molecular oxygen, creating an electrochemical gradient over the inner membrane that drives transmembrane transport and the ATP synthase. Cytochrome c oxidase is the component of the respiratory chain that catalyzes the reduction of oxygen to water. Electrons originating from reduced cytochrome c in the intermembrane space (IMS) are transferred via the dinuclear copper A center (CU(A)) of subunit 2 and heme A of subunit 1 to the active site in subunit 1, a binuclear center (BNC) formed by heme A3 and copper B (CU(B)). The BNC reduces molecular oxygen to 2 water molecules using 4 electrons from cytochrome c in the IMS and 4 protons from the mitochondrial matrix. This Saimiri sciureus (Common squirrel monkey) protein is Cytochrome c oxidase subunit 4 isoform 1, mitochondrial (COX4I1).